We begin with the raw amino-acid sequence, 414 residues long: Lipoyl synthase, mitochondrial (414 aa).

A mitochondrion-targeting transit peptide spans 1 to 18; sequence MYRRSVGVLFVGRNTRWI. Positions 51–67 are enriched in polar residues; that stretch reads GNSTEVENATSQLTGTS. The disordered stretch occupies residues 51 to 75; sequence GNSTEVENATSQLTGTSGKRRKGNR. 7 residues coordinate [4Fe-4S] cluster: Cys-150, Cys-155, Cys-161, Cys-181, Cys-185, Cys-188, and Ser-396. A Radical SAM core domain is found at 164 to 385; it reads GKDKSKATAT…KERALEMGFL (222 aa).

It belongs to the radical SAM superfamily. Lipoyl synthase family. [4Fe-4S] cluster is required as a cofactor.

It is found in the mitochondrion. The enzyme catalyses [[Fe-S] cluster scaffold protein carrying a second [4Fe-4S](2+) cluster] + N(6)-octanoyl-L-lysyl-[protein] + 2 oxidized [2Fe-2S]-[ferredoxin] + 2 S-adenosyl-L-methionine + 4 H(+) = [[Fe-S] cluster scaffold protein] + N(6)-[(R)-dihydrolipoyl]-L-lysyl-[protein] + 4 Fe(3+) + 2 hydrogen sulfide + 2 5'-deoxyadenosine + 2 L-methionine + 2 reduced [2Fe-2S]-[ferredoxin]. Its pathway is protein modification; protein lipoylation via endogenous pathway; protein N(6)-(lipoyl)lysine from octanoyl-[acyl-carrier-protein]: step 2/2. Functionally, catalyzes the radical-mediated insertion of two sulfur atoms into the C-6 and C-8 positions of the octanoyl moiety bound to the lipoyl domains of lipoate-dependent enzymes, thereby converting the octanoylated domains into lipoylated derivatives. The sequence is that of Lipoyl synthase, mitochondrial from Saccharomyces cerevisiae (strain RM11-1a) (Baker's yeast).